A 96-amino-acid polypeptide reads, in one-letter code: Co-chaperonin GroES (96 aa).

This sequence belongs to the GroES chaperonin family. In terms of assembly, heptamer of 7 subunits arranged in a ring. Interacts with the chaperonin GroEL.

The protein localises to the cytoplasm. In terms of biological role, together with the chaperonin GroEL, plays an essential role in assisting protein folding. The GroEL-GroES system forms a nano-cage that allows encapsulation of the non-native substrate proteins and provides a physical environment optimized to promote and accelerate protein folding. GroES binds to the apical surface of the GroEL ring, thereby capping the opening of the GroEL channel. This chain is Co-chaperonin GroES, found in Haemophilus influenzae (strain PittGG).